Consider the following 544-residue polypeptide: Chaperonin GroEL 2 (544 aa).

ATP-binding positions include 29-32 (TLGP), 86-90 (DGTTT), glycine 413, 479-481 (NAA), and aspartate 495.

The protein belongs to the chaperonin (HSP60) family. In terms of assembly, forms a cylinder of 14 subunits composed of two heptameric rings stacked back-to-back. Interacts with the co-chaperonin GroES.

Its subcellular location is the cytoplasm. It catalyses the reaction ATP + H2O + a folded polypeptide = ADP + phosphate + an unfolded polypeptide.. Functionally, together with its co-chaperonin GroES, plays an essential role in assisting protein folding. The GroEL-GroES system forms a nano-cage that allows encapsulation of the non-native substrate proteins and provides a physical environment optimized to promote and accelerate protein folding. In Prochlorococcus marinus (strain MIT 9515), this protein is Chaperonin GroEL 2.